We begin with the raw amino-acid sequence, 432 residues long: Trigger factor (432 aa).

The PPIase FKBP-type domain occupies 161–246; sequence EDRVTIDFTG…LKKVEERELP (86 aa).

Belongs to the FKBP-type PPIase family. Tig subfamily. As to quaternary structure, homodimer and monomer. In vivo most of the ribosomes are in complex with monomeric TF. Uncomplexed TF, however, is in a monomer-dimer equilibrium with approximately two thirds of TF existing in a dimeric state.

It localises to the cytoplasm. It catalyses the reaction [protein]-peptidylproline (omega=180) = [protein]-peptidylproline (omega=0). In terms of biological role, involved in protein export. Acts as a chaperone by maintaining the newly synthesized protein in an open conformation. Functions as a peptidyl-prolyl cis-trans isomerase. The sequence is that of Trigger factor from Escherichia coli O127:H6 (strain E2348/69 / EPEC).